The primary structure comprises 319 residues: Pantothenate kinase (319 aa).

G96 to S103 contacts ATP.

This sequence belongs to the prokaryotic pantothenate kinase family.

The protein resides in the cytoplasm. The catalysed reaction is (R)-pantothenate + ATP = (R)-4'-phosphopantothenate + ADP + H(+). The protein operates within cofactor biosynthesis; coenzyme A biosynthesis; CoA from (R)-pantothenate: step 1/5. This Bacillus velezensis (strain DSM 23117 / BGSC 10A6 / LMG 26770 / FZB42) (Bacillus amyloliquefaciens subsp. plantarum) protein is Pantothenate kinase.